Consider the following 427-residue polypeptide: Serine--tRNA ligase (427 aa).

231-233 is an L-serine binding site; that stretch reads TAE. 262–264 contacts ATP; the sequence is RSE. Residue glutamate 285 coordinates L-serine. ATP is bound at residue 349 to 352; that stretch reads EISS. Position 385 (serine 385) interacts with L-serine.

Belongs to the class-II aminoacyl-tRNA synthetase family. Type-1 seryl-tRNA synthetase subfamily. In terms of assembly, homodimer. The tRNA molecule binds across the dimer.

The protein localises to the cytoplasm. It carries out the reaction tRNA(Ser) + L-serine + ATP = L-seryl-tRNA(Ser) + AMP + diphosphate + H(+). It catalyses the reaction tRNA(Sec) + L-serine + ATP = L-seryl-tRNA(Sec) + AMP + diphosphate + H(+). The protein operates within aminoacyl-tRNA biosynthesis; selenocysteinyl-tRNA(Sec) biosynthesis; L-seryl-tRNA(Sec) from L-serine and tRNA(Sec): step 1/1. Functionally, catalyzes the attachment of serine to tRNA(Ser). Is also able to aminoacylate tRNA(Sec) with serine, to form the misacylated tRNA L-seryl-tRNA(Sec), which will be further converted into selenocysteinyl-tRNA(Sec). The chain is Serine--tRNA ligase from Listeria monocytogenes serotype 4b (strain CLIP80459).